The chain runs to 361 residues: PTI1-like tyrosine-protein kinase 1 (361 aa).

A disordered region spans residues 16-43 (EEQQLKSSQQQSDANHKNSKPAPVAKHE). Residues 68 to 350 (FGSKALIGEG…IVVKALQPLL (283 aa)) enclose the Protein kinase domain. ATP-binding positions include 74 to 82 (IGEGSYGRV) and Lys96. Asp200 acts as the Proton acceptor in catalysis.

This sequence belongs to the protein kinase superfamily. Tyr protein kinase family. Interacts with OXI1. Post-translationally, autophosphorylated and phosphorylated by OXI1.

The protein localises to the cell membrane. The enzyme catalyses L-tyrosyl-[protein] + ATP = O-phospho-L-tyrosyl-[protein] + ADP + H(+). The protein is PTI1-like tyrosine-protein kinase 1 (PTI11) of Arabidopsis thaliana (Mouse-ear cress).